We begin with the raw amino-acid sequence, 550 residues long: Chaperonin GroEL (550 aa).

Residues 30 to 33 (TLGP), K51, 87 to 91 (DGTTT), G415, 479 to 481 (NAA), and D495 each bind ATP.

This sequence belongs to the chaperonin (HSP60) family. Forms a cylinder of 14 subunits composed of two heptameric rings stacked back-to-back. Interacts with the co-chaperonin GroES.

The protein localises to the cytoplasm. The enzyme catalyses ATP + H2O + a folded polypeptide = ADP + phosphate + an unfolded polypeptide.. Together with its co-chaperonin GroES, plays an essential role in assisting protein folding. The GroEL-GroES system forms a nano-cage that allows encapsulation of the non-native substrate proteins and provides a physical environment optimized to promote and accelerate protein folding. The sequence is that of Chaperonin GroEL from Aromatoleum aromaticum (strain DSM 19018 / LMG 30748 / EbN1) (Azoarcus sp. (strain EbN1)).